Here is a 244-residue protein sequence, read N- to C-terminus: 3-oxoacyl-[acyl-carrier-protein] reductase FabG (244 aa).

Residues 12 to 15 (GANQ) and Thr37 each bind NADP(+). Ca(2+) is bound by residues Lys50 and Gly53. Residues 59 to 60 (DL) and Asn86 contribute to the NADP(+) site. Ser138 is a substrate binding site. Asn145 serves as a coordination point for Ca(2+). The active-site Proton acceptor is Tyr151. NADP(+) contacts are provided by residues 151-155 (YSASK) and Ile184. Ca(2+) contacts are provided by Gln233 and Thr234.

It belongs to the short-chain dehydrogenases/reductases (SDR) family. In terms of assembly, homotetramer.

The catalysed reaction is a (3R)-hydroxyacyl-[ACP] + NADP(+) = a 3-oxoacyl-[ACP] + NADPH + H(+). The protein operates within lipid metabolism; fatty acid biosynthesis. Its function is as follows. Catalyzes the NADPH-dependent reduction of beta-ketoacyl-ACP substrates to beta-hydroxyacyl-ACP products, the first reductive step in the elongation cycle of fatty acid biosynthesis. The chain is 3-oxoacyl-[acyl-carrier-protein] reductase FabG (fabG) from Buchnera aphidicola subsp. Schizaphis graminum (strain Sg).